The following is a 652-amino-acid chain: DNA ligase (652 aa).

Residues 29–33, 78–79, and E107 each bind NAD(+); these read DSDYD and SL. K109 (N6-AMP-lysine intermediate) is an active-site residue. Positions 130, 164, 278, and 302 each coordinate NAD(+). Zn(2+) is bound by residues C395, C398, C413, and C418. The BRCT domain occupies 577-652; the sequence is NSDAALFGLT…IEDEDWLRKF (76 aa).

The protein belongs to the NAD-dependent DNA ligase family. LigA subfamily. Requires Mg(2+) as cofactor. Mn(2+) serves as cofactor.

The catalysed reaction is NAD(+) + (deoxyribonucleotide)n-3'-hydroxyl + 5'-phospho-(deoxyribonucleotide)m = (deoxyribonucleotide)n+m + AMP + beta-nicotinamide D-nucleotide.. In terms of biological role, DNA ligase that catalyzes the formation of phosphodiester linkages between 5'-phosphoryl and 3'-hydroxyl groups in double-stranded DNA using NAD as a coenzyme and as the energy source for the reaction. It is essential for DNA replication and repair of damaged DNA. This chain is DNA ligase, found in Streptococcus pyogenes serotype M6 (strain ATCC BAA-946 / MGAS10394).